The primary structure comprises 852 residues: Lon protease homolog 2, peroxisomal (852 aa).

Ser-2 bears the N-acetylserine mark. Positions 13 to 222 constitute a Lon N-terminal domain; it reads LPLLLTHEGV…MTIPLLVRQI (210 aa). ATP is bound at residue 375-382; sequence GPPGVGKT. The Lon proteolytic domain maps to 651 to 837; sequence LSQPGVAIGL…DEVLNAAFDG (187 aa). Catalysis depends on residues Ser-743 and Lys-786. The Microbody targeting signal motif lies at 850–852; that stretch reads SKL.

It belongs to the peptidase S16 family. As to quaternary structure, interacts with PEX5. Interacts with TYSND1. May interact with enzymes involved in beta-oxidation of fatty acids, including ACOX1/AOX.

The protein resides in the peroxisome matrix. The enzyme catalyses Hydrolysis of proteins in presence of ATP.. ATP-dependent serine protease that mediates the selective degradation of misfolded and unassembled polypeptides in the peroxisomal matrix. Necessary for type 2 peroxisome targeting signal (PTS2)-containing protein processing and facilitates peroxisome matrix protein import. May indirectly regulate peroxisomal fatty acid beta-oxidation through degradation of the self-processed forms of TYSND1. The polypeptide is Lon protease homolog 2, peroxisomal (Pongo abelii (Sumatran orangutan)).